Consider the following 219-residue polypeptide: 2-hydroxy-3-keto-5-methylthiopentenyl-1-phosphate phosphatase (219 aa).

It belongs to the HAD-like hydrolase superfamily. MtnX family.

The catalysed reaction is 2-hydroxy-5-methylsulfanyl-3-oxopent-1-enyl phosphate + H2O = 1,2-dihydroxy-5-(methylsulfanyl)pent-1-en-3-one + phosphate. Its pathway is amino-acid biosynthesis; L-methionine biosynthesis via salvage pathway; L-methionine from S-methyl-5-thio-alpha-D-ribose 1-phosphate: step 4/6. Its function is as follows. Dephosphorylates 2-hydroxy-3-keto-5-methylthiopentenyl-1-phosphate (HK-MTPenyl-1-P) yielding 1,2-dihydroxy-3-keto-5-methylthiopentene (DHK-MTPene). The chain is 2-hydroxy-3-keto-5-methylthiopentenyl-1-phosphate phosphatase from Bacillus mycoides (strain KBAB4) (Bacillus weihenstephanensis).